Here is a 487-residue protein sequence, read N- to C-terminus: Glutamyl-tRNA(Gln) amidotransferase subunit A (487 aa).

Residues K82 and S157 each act as charge relay system in the active site. S181 serves as the catalytic Acyl-ester intermediate.

It belongs to the amidase family. GatA subfamily. Heterotrimer of A, B and C subunits.

The enzyme catalyses L-glutamyl-tRNA(Gln) + L-glutamine + ATP + H2O = L-glutaminyl-tRNA(Gln) + L-glutamate + ADP + phosphate + H(+). Functionally, allows the formation of correctly charged Gln-tRNA(Gln) through the transamidation of misacylated Glu-tRNA(Gln) in organisms which lack glutaminyl-tRNA synthetase. The reaction takes place in the presence of glutamine and ATP through an activated gamma-phospho-Glu-tRNA(Gln). The sequence is that of Glutamyl-tRNA(Gln) amidotransferase subunit A from Fusobacterium nucleatum subsp. nucleatum (strain ATCC 25586 / DSM 15643 / BCRC 10681 / CIP 101130 / JCM 8532 / KCTC 2640 / LMG 13131 / VPI 4355).